Here is a 309-residue protein sequence, read N- to C-terminus: Dihydroorotate dehydrogenase B (NAD(+)), catalytic subunit (309 aa).

FMN is bound by residues Ser-21 and 45 to 46; that span reads KA. Residues Lys-45 and 69-73 each bind substrate; that span reads NAIGL. Residues Asn-99 and Asn-127 each coordinate FMN. Asn-127 provides a ligand contact to substrate. Cys-130 acts as the Nucleophile in catalysis. Positions 165 and 191 each coordinate FMN. Substrate is bound at residue 192-193; the sequence is NT. FMN is bound by residues Gly-217, 243–244, and 265–266; these read GG and GT.

This sequence belongs to the dihydroorotate dehydrogenase family. Type 1 subfamily. In terms of assembly, heterotetramer of 2 PyrK and 2 PyrD type B subunits. FMN serves as cofactor.

Its subcellular location is the cytoplasm. It carries out the reaction (S)-dihydroorotate + NAD(+) = orotate + NADH + H(+). The protein operates within pyrimidine metabolism; UMP biosynthesis via de novo pathway; orotate from (S)-dihydroorotate (NAD(+) route): step 1/1. Its function is as follows. Catalyzes the conversion of dihydroorotate to orotate with NAD(+) as electron acceptor. The protein is Dihydroorotate dehydrogenase B (NAD(+)), catalytic subunit (pyrD) of Bacillus mycoides (strain KBAB4) (Bacillus weihenstephanensis).